The chain runs to 110 residues: uncharacterized protein (110 aa).

Positions 16–46 form a coiled coil; it reads ELDKLRECEERLSVIEKQKQSSKQESEETYI. Residues 85–96 are compositionally biased toward basic and acidic residues; that stretch reads EEKDKKCQRKPE. The tract at residues 85–110 is disordered; it reads EEKDKKCQRKPEAPSTPAVTIRSKRQ.

This is an uncharacterized protein from Bacillus subtilis (strain 168).